Here is a 155-residue protein sequence, read N- to C-terminus: MQFTLAAAAALFGASALAAPASPGSTGAPPDPNMYENIDIADFNVRKGEDGTIKYVNFKLSGDDADGLLCEAQNPGLPSNVITCGESKYRFALSSGKQYEFALSLYHELGLAVGFYGTGEIFTHCRAGGLGDFICQQQNPTTIVIDSLPDAPAEA.

Residues 1–18 form the signal peptide; it reads MQFTLAAAAALFGASALA. Residues 33–148 enclose the AA1-like domain; that stretch reads NMYENIDIAD…NPTTIVIDSL (116 aa). 2 cysteine pairs are disulfide-bonded: Cys-70-Cys-84 and Cys-125-Cys-135.

Monomer. Interacts with Arabidopsis thaliana NRP.

It is found in the secreted. Functionally, effector protein. Elicits a hypersensitive response (HR) in tobacco plants (N.tabacum) and cotton (G.hirsutum). Boosts systemic acquired resistance (SAR) to tobacco mosaic virus (TMV) infection in N.tabacum and to V.dhaliae infection in primed cotton seedlings. The chain is Effector protein PevD1 from Verticillium dahliae (Verticillium wilt).